The chain runs to 182 residues: NADH-quinone oxidoreductase subunit B (182 aa).

Residues C46, C47, C112, and C141 each coordinate [4Fe-4S] cluster.

It belongs to the complex I 20 kDa subunit family. In terms of assembly, NDH-1 is composed of 14 different subunits. Subunits NuoB, C, D, E, F, and G constitute the peripheral sector of the complex. [4Fe-4S] cluster serves as cofactor.

The protein localises to the cell inner membrane. It carries out the reaction a quinone + NADH + 5 H(+)(in) = a quinol + NAD(+) + 4 H(+)(out). In terms of biological role, NDH-1 shuttles electrons from NADH, via FMN and iron-sulfur (Fe-S) centers, to quinones in the respiratory chain. The immediate electron acceptor for the enzyme in this species is believed to be a menaquinone. Couples the redox reaction to proton translocation (for every two electrons transferred, four hydrogen ions are translocated across the cytoplasmic membrane), and thus conserves the redox energy in a proton gradient. This is NADH-quinone oxidoreductase subunit B from Flavobacterium johnsoniae (strain ATCC 17061 / DSM 2064 / JCM 8514 / BCRC 14874 / CCUG 350202 / NBRC 14942 / NCIMB 11054 / UW101) (Cytophaga johnsonae).